A 340-amino-acid chain; its full sequence is NADH-quinone oxidoreductase subunit H (340 aa).

9 helical membrane passes run 3–23 (LVGM…LVYM), 69–89 (WAFF…WAVI), 102–122 (VVVM…VLAI), 127–147 (VYGI…LGAI), 154–174 (ISYE…AGSL), 186–206 (MPYW…VSML), 248–268 (ILVS…PLNI), 274–294 (IPGF…FIWV), and 312–332 (KVFL…LLWV).

Belongs to the complex I subunit 1 family. NDH-1 is composed of 14 different subunits. Subunits NuoA, H, J, K, L, M, N constitute the membrane sector of the complex.

The protein localises to the cell inner membrane. It catalyses the reaction a quinone + NADH + 5 H(+)(in) = a quinol + NAD(+) + 4 H(+)(out). NDH-1 shuttles electrons from NADH, via FMN and iron-sulfur (Fe-S) centers, to quinones in the respiratory chain. The immediate electron acceptor for the enzyme in this species is believed to be ubiquinone. Couples the redox reaction to proton translocation (for every two electrons transferred, four hydrogen ions are translocated across the cytoplasmic membrane), and thus conserves the redox energy in a proton gradient. This subunit may bind ubiquinone. The chain is NADH-quinone oxidoreductase subunit H from Anaplasma phagocytophilum (strain HZ).